A 622-amino-acid chain; its full sequence is Pentatricopeptide repeat-containing protein At5g06540 (622 aa).

PPR repeat units follow at residues N81–P115, D116–N150, D151–R181, D182–R212, N213–A247, N248–V282, N283–T313, D314–P348, R349–P384, and R385–P419. The tract at residues I420 to D495 is type E motif. The tract at residues G496–R527 is type E(+) motif. The type DYW motif stretch occupies residues L528 to W622.

The protein belongs to the PPR family. PCMP-H subfamily.

The polypeptide is Pentatricopeptide repeat-containing protein At5g06540 (PCMP-H88) (Arabidopsis thaliana (Mouse-ear cress)).